Here is a 562-residue protein sequence, read N- to C-terminus: NAD-dependent malic enzyme (562 aa).

Tyr101 acts as the Proton donor in catalysis. Arg154 is an NAD(+) binding site. Catalysis depends on Lys172, which acts as the Proton acceptor. Positions 243, 244, and 267 each coordinate a divalent metal cation. NAD(+)-binding residues include Asp267 and Asn415.

The protein belongs to the malic enzymes family. Homotetramer. Mg(2+) is required as a cofactor. The cofactor is Mn(2+).

The enzyme catalyses (S)-malate + NAD(+) = pyruvate + CO2 + NADH. It catalyses the reaction oxaloacetate + H(+) = pyruvate + CO2. In Shewanella sp. (strain MR-4), this protein is NAD-dependent malic enzyme.